Here is a 423-residue protein sequence, read N- to C-terminus: Methylenetetrahydrofolate--tRNA-(uracil-5-)-methyltransferase TrmFO 2 (423 aa).

8 to 13 is an FAD binding site; the sequence is GAGLSG.

Belongs to the MnmG family. TrmFO subfamily. FAD is required as a cofactor.

The protein localises to the cytoplasm. It catalyses the reaction uridine(54) in tRNA + (6R)-5,10-methylene-5,6,7,8-tetrahydrofolate + NADH + H(+) = 5-methyluridine(54) in tRNA + (6S)-5,6,7,8-tetrahydrofolate + NAD(+). It carries out the reaction uridine(54) in tRNA + (6R)-5,10-methylene-5,6,7,8-tetrahydrofolate + NADPH + H(+) = 5-methyluridine(54) in tRNA + (6S)-5,6,7,8-tetrahydrofolate + NADP(+). Its function is as follows. Catalyzes the folate-dependent formation of 5-methyl-uridine at position 54 (M-5-U54) in all tRNAs. In Mycoplasma capricolum subsp. capricolum (strain California kid / ATCC 27343 / NCTC 10154), this protein is Methylenetetrahydrofolate--tRNA-(uracil-5-)-methyltransferase TrmFO 2.